We begin with the raw amino-acid sequence, 234 residues long: Large ribosomal subunit protein uL1 (234 aa).

Belongs to the universal ribosomal protein uL1 family. Part of the 50S ribosomal subunit.

In terms of biological role, binds directly to 23S rRNA. The L1 stalk is quite mobile in the ribosome, and is involved in E site tRNA release. Functionally, protein L1 is also a translational repressor protein, it controls the translation of the L11 operon by binding to its mRNA. The protein is Large ribosomal subunit protein uL1 of Psychromonas ingrahamii (strain DSM 17664 / CCUG 51855 / 37).